The following is a 1182-amino-acid chain: Myosin IC heavy chain (1182 aa).

Residues E15–E698 enclose the Myosin motor domain. An ATP-binding site is contributed by G109–T116. Residues A571–D593 are actin-binding. The TH1 domain occupies R774 to A957. Disordered stretches follow at residues K999–G1052 and S1064–Q1103. The segment covering K1013–P1042 has biased composition (low complexity). A compositionally biased stretch (pro residues) spans P1081–A1092. Residues P1123–I1182 form the SH3 domain.

It belongs to the TRAFAC class myosin-kinesin ATPase superfamily. Myosin family. In terms of assembly, myosin I heavy chain is single-headed. Dimer of a heavy and a light chain. Inability to self-assemble into filaments.

Its subcellular location is the cell projection. The protein resides in the lamellipodium. Myosin is a protein that binds to actin and has ATPase activity that is activated by actin. Involved in the process of phagocytosis and appears to support streaming behavior. The protein is Myosin IC heavy chain (myoC) of Dictyostelium discoideum (Social amoeba).